Here is a 149-residue protein sequence, read N- to C-terminus: Ribonuclease H (149 aa).

Residues 1 to 142 (MSTITIHTDG…ADELAREGLA (142 aa)) form the RNase H type-1 domain. Mg(2+) contacts are provided by D9, E47, D70, and D134. The disordered stretch occupies residues 124–149 (HAGDPGNERADELAREGLAEARGRQP). Residues 129-149 (GNERADELAREGLAEARGRQP) are compositionally biased toward basic and acidic residues.

The protein belongs to the RNase H family. As to quaternary structure, monomer. Mg(2+) serves as cofactor.

It localises to the cytoplasm. The catalysed reaction is Endonucleolytic cleavage to 5'-phosphomonoester.. In terms of biological role, endonuclease that specifically degrades the RNA of RNA-DNA hybrids. The protein is Ribonuclease H of Maricaulis maris (strain MCS10) (Caulobacter maris).